The following is a 258-amino-acid chain: Adenosylcobinamide-GDP ribazoletransferase (258 aa).

A run of 6 helical transmembrane segments spans residues 41–61 (FFPLVGWLVGAAGALAYWLAS), 65–85 (PAPGVAVAASMAATLLLTGAF), 115–135 (IGAFGAIAVCMALLLKWQLLM), 136–156 (AMAAQHAAAAMAAMVAAHAAS), 197–217 (LPLLGFGMACAAIAVAVLLAA), and 236–256 (CLGLAQQVFELLVLWVLLAWT).

The protein belongs to the CobS family. The cofactor is Mg(2+).

The protein localises to the cell inner membrane. It catalyses the reaction alpha-ribazole + adenosylcob(III)inamide-GDP = adenosylcob(III)alamin + GMP + H(+). The enzyme catalyses alpha-ribazole 5'-phosphate + adenosylcob(III)inamide-GDP = adenosylcob(III)alamin 5'-phosphate + GMP + H(+). It participates in cofactor biosynthesis; adenosylcobalamin biosynthesis; adenosylcobalamin from cob(II)yrinate a,c-diamide: step 7/7. Joins adenosylcobinamide-GDP and alpha-ribazole to generate adenosylcobalamin (Ado-cobalamin). Also synthesizes adenosylcobalamin 5'-phosphate from adenosylcobinamide-GDP and alpha-ribazole 5'-phosphate. The chain is Adenosylcobinamide-GDP ribazoletransferase from Ralstonia nicotianae (strain ATCC BAA-1114 / GMI1000) (Ralstonia solanacearum).